The chain runs to 388 residues: Succinate--CoA ligase [ADP-forming] subunit beta (388 aa).

In terms of domain architecture, ATP-grasp spans 9 to 245 (KELLAGYGLP…KSQENERELK (237 aa)). ATP is bound by residues Lys-46, 53–55 (GRG), Glu-100, Tyr-103, and Glu-108. 2 residues coordinate Mg(2+): Asn-200 and Asp-214. Substrate-binding positions include Asn-265 and 322–324 (GIV).

The protein belongs to the succinate/malate CoA ligase beta subunit family. As to quaternary structure, heterotetramer of two alpha and two beta subunits. Mg(2+) is required as a cofactor.

The catalysed reaction is succinate + ATP + CoA = succinyl-CoA + ADP + phosphate. It carries out the reaction GTP + succinate + CoA = succinyl-CoA + GDP + phosphate. The protein operates within carbohydrate metabolism; tricarboxylic acid cycle; succinate from succinyl-CoA (ligase route): step 1/1. Its function is as follows. Succinyl-CoA synthetase functions in the citric acid cycle (TCA), coupling the hydrolysis of succinyl-CoA to the synthesis of either ATP or GTP and thus represents the only step of substrate-level phosphorylation in the TCA. The beta subunit provides nucleotide specificity of the enzyme and binds the substrate succinate, while the binding sites for coenzyme A and phosphate are found in the alpha subunit. This Neisseria meningitidis serogroup C (strain 053442) protein is Succinate--CoA ligase [ADP-forming] subunit beta.